The sequence spans 273 residues: Proteasome subunit beta (273 aa).

The propeptide at 1–50 is removed in mature form; by autocatalysis; the sequence is MRKDGARLALPLFDPRHDPGPDFAALVSRDAARTVPTSGDGSLGAQVPHG. Residue threonine 51 is the Nucleophile of the active site.

Belongs to the peptidase T1B family. The 20S proteasome core is composed of 14 alpha and 14 beta subunits that assemble into four stacked heptameric rings, resulting in a barrel-shaped structure. The two inner rings, each composed of seven catalytic beta subunits, are sandwiched by two outer rings, each composed of seven alpha subunits. The catalytic chamber with the active sites is on the inside of the barrel. Has a gated structure, the ends of the cylinder being occluded by the N-termini of the alpha-subunits. Is capped by the proteasome-associated ATPase, ARC.

The protein resides in the cytoplasm. The catalysed reaction is Cleavage of peptide bonds with very broad specificity.. The protein operates within protein degradation; proteasomal Pup-dependent pathway. Its activity is regulated as follows. The formation of the proteasomal ATPase ARC-20S proteasome complex, likely via the docking of the C-termini of ARC into the intersubunit pockets in the alpha-rings, may trigger opening of the gate for substrate entry. Interconversion between the open-gate and close-gate conformations leads to a dynamic regulation of the 20S proteasome proteolysis activity. In terms of biological role, component of the proteasome core, a large protease complex with broad specificity involved in protein degradation. The protein is Proteasome subunit beta of Acidimicrobium ferrooxidans (strain DSM 10331 / JCM 15462 / NBRC 103882 / ICP).